A 546-amino-acid polypeptide reads, in one-letter code: Chaperonin GroEL 2 (546 aa).

Residues 30 to 33 (TLGP), lysine 51, 87 to 91 (DGTTT), glycine 415, 479 to 481 (NAA), and aspartate 495 contribute to the ATP site.

This sequence belongs to the chaperonin (HSP60) family. As to quaternary structure, forms a cylinder of 14 subunits composed of two heptameric rings stacked back-to-back. Interacts with the co-chaperonin GroES.

Its subcellular location is the cytoplasm. The catalysed reaction is ATP + H2O + a folded polypeptide = ADP + phosphate + an unfolded polypeptide.. Its function is as follows. Together with its co-chaperonin GroES, plays an essential role in assisting protein folding. The GroEL-GroES system forms a nano-cage that allows encapsulation of the non-native substrate proteins and provides a physical environment optimized to promote and accelerate protein folding. This Chromobacterium violaceum (strain ATCC 12472 / DSM 30191 / JCM 1249 / CCUG 213 / NBRC 12614 / NCIMB 9131 / NCTC 9757 / MK) protein is Chaperonin GroEL 2.